The chain runs to 258 residues: Ribosomal RNA small subunit methyltransferase J (258 aa).

Residues 107–108 (RD), 123–124 (ER), and aspartate 177 each bind S-adenosyl-L-methionine.

The protein belongs to the methyltransferase superfamily. RsmJ family.

It is found in the cytoplasm. The enzyme catalyses guanosine(1516) in 16S rRNA + S-adenosyl-L-methionine = N(2)-methylguanosine(1516) in 16S rRNA + S-adenosyl-L-homocysteine + H(+). Functionally, specifically methylates the guanosine in position 1516 of 16S rRNA. The polypeptide is Ribosomal RNA small subunit methyltransferase J (Stutzerimonas stutzeri (strain A1501) (Pseudomonas stutzeri)).